Here is a 581-residue protein sequence, read N- to C-terminus: uncharacterized protein (581 aa).

This is an uncharacterized protein from Borreliella burgdorferi (strain ATCC 35210 / DSM 4680 / CIP 102532 / B31) (Borrelia burgdorferi).